We begin with the raw amino-acid sequence, 350 residues long: Guanine nucleotide-binding protein G(t) subunit alpha-1 (350 aa).

Residues 1–21 (MGAGASAEEKHSRELEKKLKE) are disordered. Gly-2 carries the N-myristoyl glycine lipid modification. A compositionally biased stretch (basic and acidic residues) spans 7–21 (AEEKHSRELEKKLKE). The region spanning 28–350 (RTVKLLLLGA…KENLKDCGLF (323 aa)) is the G-alpha domain. The tract at residues 31 to 44 (KLLLLGAGESGKST) is G1 motif. 36-43 (GAGESGKS) is a GTP binding site. Ser-43 contributes to the Mg(2+) binding site. Tyr-142 bears the Phosphotyrosine; by SRC mark. GTP-binding positions include Asp-146, 171 to 177 (LRSRVKT), Gly-199, 265 to 268 (NKKD), and Ala-322. The segment at 169-177 (DVLRSRVKT) is G2 motif. ADP-ribosylarginine; by cholera toxin is present on Arg-174. Position 177 (Thr-177) interacts with Mg(2+). The tract at residues 192 to 201 (FRMFDVGGQR) is G3 motif. The segment at 261-268 (VLFLNKKD) is G4 motif. Positions 320–325 (TCATDT) are G5 motif. The interaction with RHO stretch occupies residues 340–350 (IKENLKDCGLF). The residue at position 347 (Cys-347) is an ADP-ribosylcysteine; by pertussis toxin.

The protein belongs to the G-alpha family. G(i/o/t/z) subfamily. In terms of assembly, heterotrimeric G proteins are composed of 3 subunits alpha, beta and gamma. The alpha chain contains the guanine nucleotide binding site. Interacts with RHO. Interacts with RGS9 and PDE6G. Interacts (when myristoylated) with UNC119; interaction is required for localization in sensory neurons. In terms of tissue distribution, rod photoreceptor cells. Predominantly expressed in the retina followed by the ciliary body, iris and retinal pigment epithelium.

The protein resides in the cell projection. The protein localises to the cilium. It localises to the photoreceptor outer segment. Its subcellular location is the membrane. It is found in the photoreceptor inner segment. Functionally, functions as a signal transducer for the rod photoreceptor RHO. Required for normal RHO-mediated light perception by the retina. Guanine nucleotide-binding proteins (G proteins) function as transducers downstream of G protein-coupled receptors (GPCRs), such as the photoreceptor RHO. The alpha chain contains the guanine nucleotide binding site and alternates between an active, GTP-bound state and an inactive, GDP-bound state. Activated RHO promotes GDP release and GTP binding. Signaling is mediated via downstream effector proteins, such as cGMP-phosphodiesterase. The polypeptide is Guanine nucleotide-binding protein G(t) subunit alpha-1 (GNAT1) (Homo sapiens (Human)).